The primary structure comprises 53 residues: UPF0391 membrane protein ESA_03375 (53 aa).

2 consecutive transmembrane segments (helical) span residues 4–24 (WGII…GGLA) and 28–48 (AGAA…SLFM).

The protein belongs to the UPF0391 family.

It localises to the cell membrane. In Cronobacter sakazakii (strain ATCC BAA-894) (Enterobacter sakazakii), this protein is UPF0391 membrane protein ESA_03375.